Reading from the N-terminus, the 228-residue chain is UPF0173 metal-dependent hydrolase RBAM_026340 (228 aa).

The protein belongs to the UPF0173 family.

This is UPF0173 metal-dependent hydrolase RBAM_026340 from Bacillus velezensis (strain DSM 23117 / BGSC 10A6 / LMG 26770 / FZB42) (Bacillus amyloliquefaciens subsp. plantarum).